We begin with the raw amino-acid sequence, 231 residues long: Putative cobalt transport protein CbiM 1 (231 aa).

Transmembrane regions (helical) follow at residues 8 to 28 (LPLQ…AYGI), 41 to 61 (TLPL…LKMP), 74 to 94 (GLGA…IVLV), 97 to 117 (ALFL…SMGI), 138 to 158 (IVNV…ITSI), and 175 to 195 (FITF…IEGI).

The protein belongs to the CbiM family. As to quaternary structure, forms an energy-coupling factor (ECF) transporter complex composed of an ATP-binding protein (A component, CbiO), a transmembrane protein (T component, CbiQ) and 2 possible substrate-capture proteins (S components, CbiM and CbiN) of unknown stoichimetry.

The protein localises to the cell membrane. Its pathway is cofactor biosynthesis; adenosylcobalamin biosynthesis. In terms of biological role, part of the energy-coupling factor (ECF) transporter complex CbiMNOQ involved in cobalt import. The chain is Putative cobalt transport protein CbiM 1 from Methanosphaerula palustris (strain ATCC BAA-1556 / DSM 19958 / E1-9c).